A 228-amino-acid chain; its full sequence is Prolactin (228 aa).

The N-terminal stretch at 1-29 (MCPKGSSVKGSLLLLLLMSSRFLFKAVES) is a signal peptide. An intrachain disulfide couples Cys33 to Cys40. Phosphoserine is present on residues Ser55, Ser63, and Ser119. Disulfide bonds link Cys87–Cys203 and Cys220–Cys228.

The protein belongs to the somatotropin/prolactin family. Interacts with PRLR.

The protein resides in the secreted. Functionally, prolactin acts primarily on the mammary gland by promoting lactation. This chain is Prolactin (PRL), found in Monodelphis domestica (Gray short-tailed opossum).